We begin with the raw amino-acid sequence, 494 residues long: Lipopolysaccharide core galacturonosyltransferase RgtB (494 aa).

Transmembrane regions (helical) follow at residues 9-29 (ISWI…VRLA), 74-94 (LTAL…LYGL), 104-124 (ALVA…FEMQ), 127-147 (LTHT…FIRS), 156-176 (YLIA…FAIL), 197-217 (WRLG…LFWL), 251-271 (LALA…IVFG), 291-311 (MMLV…AAGI), 316-336 (LVPM…AAGV), and 345-365 (FIPV…GSVA).

It belongs to the glycosyltransferase 83 family.

The protein localises to the cell inner membrane. Its pathway is bacterial outer membrane biogenesis; LPS core biosynthesis. Functionally, involved in the modification of the lipopolysaccharide (LPS) inner core. Catalyzes the transfer of a galacturonic acid (GalA) residue to the 5-position of the outer Kdo (3-deoxy-D-manno-octulosonic acid) residue of the LPS inner core, using dodecaprenyl phosphate-GalA as the donor substrate. Acts after the other GalA transferase RgtA. This is Lipopolysaccharide core galacturonosyltransferase RgtB from Rhizobium johnstonii (strain DSM 114642 / LMG 32736 / 3841) (Rhizobium leguminosarum bv. viciae).